The sequence spans 337 residues: Phospholipase A1 1 (337 aa).

Residues 1 to 21 (MNFKYSILFICFVKVLDNCYA) form the signal peptide. A propeptide spanning residues 22–35 (ADDLTTLRNGTLDR) is cleaved from the precursor. C41 and C124 are oxidised to a cystine. S174 (nucleophile) is an active-site residue. The active-site Charge relay system is the D202. Cystine bridges form between C213–C218 and C256–C261. Residue H263 is the Charge relay system of the active site. 3 disulfides stabilise this stretch: C278-C305, C279-C330, and C298-C303.

The protein belongs to the AB hydrolase superfamily. Lipase family. As to expression, expressed by the venom gland.

It localises to the secreted. The enzyme catalyses a 1,2-diacyl-sn-glycero-3-phosphocholine + H2O = a 2-acyl-sn-glycero-3-phosphocholine + a fatty acid + H(+). Its function is as follows. Catalyzes the hydrolysis of phosphatidylcholine with phospholipase A1 activity. May act as an allergen and induce hemolytic activity. The sequence is that of Phospholipase A1 1 from Polistes dominula (European paper wasp).